Reading from the N-terminus, the 345-residue chain is NADH-quinone oxidoreductase subunit H 1 (345 aa).

9 consecutive transmembrane segments (helical) span residues 11–31 (IILT…ISLL), 50–70 (PNVV…KYIF), 84–104 (FFLA…VIPF), 115–135 (VAIL…IMGG), 161–181 (LGLI…SHIV), 187–207 (AFGL…LFFI), 248–268 (YIAI…GWLS), 277–297 (VFWM…VKAI), and 309–329 (IGWK…AFLA).

It belongs to the complex I subunit 1 family. NDH-1 is composed of 14 different subunits. Subunits NuoA, H, J, K, L, M, N constitute the membrane sector of the complex.

Its subcellular location is the cell inner membrane. The catalysed reaction is a quinone + NADH + 5 H(+)(in) = a quinol + NAD(+) + 4 H(+)(out). Its function is as follows. NDH-1 shuttles electrons from NADH, via FMN and iron-sulfur (Fe-S) centers, to quinones in the respiratory chain. The immediate electron acceptor for the enzyme in this species is believed to be ubiquinone. Couples the redox reaction to proton translocation (for every two electrons transferred, four hydrogen ions are translocated across the cytoplasmic membrane), and thus conserves the redox energy in a proton gradient. This subunit may bind ubiquinone. The chain is NADH-quinone oxidoreductase subunit H 1 from Cereibacter sphaeroides (strain ATCC 17023 / DSM 158 / JCM 6121 / CCUG 31486 / LMG 2827 / NBRC 12203 / NCIMB 8253 / ATH 2.4.1.) (Rhodobacter sphaeroides).